Consider the following 119-residue polypeptide: Ribonuclease P protein component (119 aa).

Belongs to the RnpA family. In terms of assembly, consists of a catalytic RNA component (M1 or rnpB) and a protein subunit.

It catalyses the reaction Endonucleolytic cleavage of RNA, removing 5'-extranucleotides from tRNA precursor.. RNaseP catalyzes the removal of the 5'-leader sequence from pre-tRNA to produce the mature 5'-terminus. It can also cleave other RNA substrates such as 4.5S RNA. The protein component plays an auxiliary but essential role in vivo by binding to the 5'-leader sequence and broadening the substrate specificity of the ribozyme. This chain is Ribonuclease P protein component, found in Cronobacter sakazakii (strain ATCC BAA-894) (Enterobacter sakazakii).